The primary structure comprises 430 residues: Enolase (430 aa).

Gln-167 is a binding site for (2R)-2-phosphoglycerate. Glu-209 functions as the Proton donor in the catalytic mechanism. Residues Asp-246, Glu-289, and Asp-316 each coordinate Mg(2+). Residues Lys-341, Arg-370, Ser-371, and Lys-392 each contribute to the (2R)-2-phosphoglycerate site. Lys-341 (proton acceptor) is an active-site residue.

This sequence belongs to the enolase family. As to quaternary structure, component of the RNA degradosome, a multiprotein complex involved in RNA processing and mRNA degradation. Mg(2+) serves as cofactor.

Its subcellular location is the cytoplasm. The protein resides in the secreted. It is found in the cell surface. The enzyme catalyses (2R)-2-phosphoglycerate = phosphoenolpyruvate + H2O. Its pathway is carbohydrate degradation; glycolysis; pyruvate from D-glyceraldehyde 3-phosphate: step 4/5. Functionally, catalyzes the reversible conversion of 2-phosphoglycerate (2-PG) into phosphoenolpyruvate (PEP). It is essential for the degradation of carbohydrates via glycolysis. The polypeptide is Enolase (Alcanivorax borkumensis (strain ATCC 700651 / DSM 11573 / NCIMB 13689 / SK2)).